We begin with the raw amino-acid sequence, 393 residues long: NAD(P)H-quinone oxidoreductase subunit H, chloroplastic (393 aa).

The protein belongs to the complex I 49 kDa subunit family. As to quaternary structure, NDH is composed of at least 16 different subunits, 5 of which are encoded in the nucleus.

The protein resides in the plastid. It localises to the chloroplast thylakoid membrane. The enzyme catalyses a plastoquinone + NADH + (n+1) H(+)(in) = a plastoquinol + NAD(+) + n H(+)(out). It catalyses the reaction a plastoquinone + NADPH + (n+1) H(+)(in) = a plastoquinol + NADP(+) + n H(+)(out). NDH shuttles electrons from NAD(P)H:plastoquinone, via FMN and iron-sulfur (Fe-S) centers, to quinones in the photosynthetic chain and possibly in a chloroplast respiratory chain. The immediate electron acceptor for the enzyme in this species is believed to be plastoquinone. Couples the redox reaction to proton translocation, and thus conserves the redox energy in a proton gradient. The polypeptide is NAD(P)H-quinone oxidoreductase subunit H, chloroplastic (Ipomoea purpurea (Common morning glory)).